The chain runs to 112 residues: Large ribosomal subunit protein bL17 (112 aa).

This sequence belongs to the bacterial ribosomal protein bL17 family. Part of the 50S ribosomal subunit. Contacts protein L32.

The protein is Large ribosomal subunit protein bL17 of Desulforamulus reducens (strain ATCC BAA-1160 / DSM 100696 / MI-1) (Desulfotomaculum reducens).